Reading from the N-terminus, the 340-residue chain is Cathepsin B (340 aa).

An N-terminal signal peptide occupies residues 1–17 (MSWSRSILCLLGAFANA). A propeptide spans 18-79 (RSIPYYPPLS…ERVDFAEDMD (62 aa)) (activation peptide). An N-linked (GlcNAc...) asparagine glycan is attached at asparagine 38. 6 cysteine pairs are disulfide-bonded: cysteine 93-cysteine 122, cysteine 105-cysteine 150, cysteine 141-cysteine 208, cysteine 142-cysteine 146, cysteine 179-cysteine 212, and cysteine 187-cysteine 198. Residue cysteine 108 is part of the active site. An N-linked (GlcNAc...) asparagine glycan is attached at asparagine 192. Active-site residues include histidine 279 and asparagine 299.

It belongs to the peptidase C1 family. As to quaternary structure, dimer of a heavy chain and a light chain cross-linked by a disulfide bond.

The protein localises to the lysosome. It catalyses the reaction Hydrolysis of proteins with broad specificity for peptide bonds. Preferentially cleaves -Arg-Arg-|-Xaa bonds in small molecule substrates (thus differing from cathepsin L). In addition to being an endopeptidase, shows peptidyl-dipeptidase activity, liberating C-terminal dipeptides.. In terms of biological role, thiol protease which is believed to participate in intracellular degradation and turnover of proteins. Has also been implicated in tumor invasion and metastasis. The sequence is that of Cathepsin B (CTSB) from Gallus gallus (Chicken).